The sequence spans 95 residues: Acylphosphatase (95 aa).

The Acylphosphatase-like domain occupies 5-93; the sequence is RAHLYIKGKV…GEFQDFRILP (89 aa). Active-site residues include arginine 20 and asparagine 38.

This sequence belongs to the acylphosphatase family.

It carries out the reaction an acyl phosphate + H2O = a carboxylate + phosphate + H(+). The polypeptide is Acylphosphatase (acyP) (Pyrobaculum islandicum (strain DSM 4184 / JCM 9189 / GEO3)).